Here is a 248-residue protein sequence, read N- to C-terminus: tRNA (guanine-N(1)-)-methyltransferase (248 aa).

S-adenosyl-L-methionine contacts are provided by residues Gly-113 and 133 to 138; that span reads IGDFVL.

This sequence belongs to the RNA methyltransferase TrmD family. In terms of assembly, homodimer.

It is found in the cytoplasm. The catalysed reaction is guanosine(37) in tRNA + S-adenosyl-L-methionine = N(1)-methylguanosine(37) in tRNA + S-adenosyl-L-homocysteine + H(+). Specifically methylates guanosine-37 in various tRNAs. The protein is tRNA (guanine-N(1)-)-methyltransferase of Dehalococcoides mccartyi (strain ATCC BAA-2100 / JCM 16839 / KCTC 5957 / BAV1).